The following is a 424-amino-acid chain: MEKALLEIEEKARLARAASRPLSYASSAQKDAALKNIARCLLDNEPAILEANLKDQNEAKASGMLPAMLDRLIIDQSRLEGIAKDTFAIAALPDPVGEIFDMNTMPNGLIIGKKRVPLGVIAAIYESRPNVTVDIASLCLKAGNAVILRGGKETIHSNTILAKLIRQAVEQAGLPKEAVQFIENTDRNLVNHLLKLSDQIDLVIPRGGAGLISYVKQNSFIPVVAGGIGVVHVYVDADAKVTDAVNIAYNSKVQRPTVCNAMDTLLVHKDIAPVFLPAVAAEWSKAGVEIRADEAALKILENTFGCKLIPATPDDWGKEFLALIAAVKVVDSLDEALSHIARYGSGHTESIVTQNYTSSQRFLNEVDAAAVMVNASTRFTDGSQFGLGAELGISTQKMHARGPMGLKEITSYKWIVYGSGQIRG.

The protein belongs to the gamma-glutamyl phosphate reductase family.

It is found in the cytoplasm. The enzyme catalyses L-glutamate 5-semialdehyde + phosphate + NADP(+) = L-glutamyl 5-phosphate + NADPH + H(+). Its pathway is amino-acid biosynthesis; L-proline biosynthesis; L-glutamate 5-semialdehyde from L-glutamate: step 2/2. Its function is as follows. Catalyzes the NADPH-dependent reduction of L-glutamate 5-phosphate into L-glutamate 5-semialdehyde and phosphate. The product spontaneously undergoes cyclization to form 1-pyrroline-5-carboxylate. This chain is Gamma-glutamyl phosphate reductase, found in Dehalococcoides mccartyi (strain CBDB1).